Here is a 340-residue protein sequence, read N- to C-terminus: tRNA N6-adenosine threonylcarbamoyltransferase (340 aa).

Residues His-113 and His-117 each contribute to the Fe cation site. Residues 135–139 (LVSGG), Asp-169, Gly-182, Asp-186, and Asn-274 contribute to the substrate site. Asp-302 contributes to the Fe cation binding site.

The protein belongs to the KAE1 / TsaD family. Fe(2+) serves as cofactor.

Its subcellular location is the cytoplasm. It catalyses the reaction L-threonylcarbamoyladenylate + adenosine(37) in tRNA = N(6)-L-threonylcarbamoyladenosine(37) in tRNA + AMP + H(+). In terms of biological role, required for the formation of a threonylcarbamoyl group on adenosine at position 37 (t(6)A37) in tRNAs that read codons beginning with adenine. Is involved in the transfer of the threonylcarbamoyl moiety of threonylcarbamoyl-AMP (TC-AMP) to the N6 group of A37, together with TsaE and TsaB. TsaD likely plays a direct catalytic role in this reaction. This chain is tRNA N6-adenosine threonylcarbamoyltransferase, found in Mycobacterium sp. (strain KMS).